The sequence spans 847 residues: Histidine decarboxylase (847 aa).

Residues F80 and H193 each contribute to the substrate site. K304 is subject to N6-(pyridoxal phosphate)lysine. Residues 575-605 show a composition bias toward polar residues; the sequence is GNGATRTSTTNSYGHTTSAAQANSERQASIQ. Disordered regions lie at residues 575-662, 769-798, and 813-847; these read GNGA…RSSP, QSQS…MSSL, and SQPM…MESL. Acidic residues predominate over residues 606–616; the sequence is EDNEESPEETE. Low complexity-rich tracts occupy residues 634–657 and 769–787; these read SLST…TQSS and QSQS…LSGG. A compositionally biased stretch (polar residues) spans 832 to 847; it reads DSDATVCSTTSSMESL.

The protein belongs to the group II decarboxylase family. Homodimer. Pyridoxal 5'-phosphate serves as cofactor. In terms of tissue distribution, localized primarily to the photoreceptors, in the eye.

It carries out the reaction L-histidine + H(+) = histamine + CO2. Its function is as follows. Required in photoreceptor transmitter synthesis. Catlayzes the conversion of L-histidine to histamine. The sequence is that of Histidine decarboxylase (Hdc) from Drosophila melanogaster (Fruit fly).